A 623-amino-acid polypeptide reads, in one-letter code: MGDLPGSGSTAQPRDAAVTGTGGNSTAGGGSSVGSTAVDRPPSPARLSHTSEKHPKVTLTELNMLRRHRELCDVVLNVGGRKIFAHRVILSACSSYFCAMFTGELEESRQTEVTIRDIDENAMELLIDFCYTAHIIVEESNVQTLLPAACLLQLVEIQDICCEFLKRQLDPTNCLGIRAFADTHSCRELLRIADKFTQHNFQEVMESEEFLLLPVGQLVDIICSDELNVRSEEQVFNAVMSWLKYNVAERRQHLAQVLQHVRLPLLSPKFLVGTVGSDLLVRSDEACRDLVDEAKNYLLLPQERPLMQGPRTRPRKPTRRGEVLFAVGGWCSGDAIASVERFDPQTNDWKMVAPMSKRRCGVGVAVLNDLLYAVGGHDGQSYLNSIERYDPQTNQWSCDVAPTTSCRTSVGVAVLDGFLYAVGGQDGVQCLNHVERYDPKENKWSKVAPMTTRRLGVAVAVLGGFLYAIGGSDGQCPLNTVERYDPRHNKWVAVSPMSTRRKHLGCAVFNNYIYAVGGRDDCMELSSAERYNPLTNTWSPIVAMTSRRSGVGLAVVNGQLYAVGGFDGSAYLKTIEVYDPETNQWRLCGCMNYRRLGGGVGVMRAPQTENYMWCENSFKQPNS.

A disordered region spans residues 1–54; sequence MGDLPGSGSTAQPRDAAVTGTGGNSTAGGGSSVGSTAVDRPPSPARLSHTSEKH. Position 19 is a phosphothreonine (threonine 19). Gly residues predominate over residues 20–32; sequence GTGGNSTAGGGSS. One can recognise a BTB domain in the interval 72 to 139; the sequence is CDVVLNVGGR…CYTAHIIVEE (68 aa). A BACK domain is found at 174-276; the sequence is CLGIRAFADT…SPKFLVGTVG (103 aa). Kelch repeat units lie at residues 323 to 369, 371 to 417, 418 to 464, 466 to 511, 513 to 558, and 559 to 605; these read VLFA…VLND, LYAV…VLDG, FLYA…VLGG, LYAI…VFNN, IYAV…VVNG, and QLYA…VMRA.

It participates in protein modification; protein ubiquitination. Its function is as follows. Probable substrate-specific adapter of an E3 ubiquitin-protein ligase complex which mediates the ubiquitination and subsequent proteasomal degradation of target proteins. May have a role in synapse differentiation and growth. The polypeptide is Kelch-like protein diablo (Drosophila melanogaster (Fruit fly)).